Consider the following 190-residue polypeptide: MKRFMQIWKPAVVGFLLLTLVCGVVYPGIVTIIAGAAFQDKANGSIIERKLANGETGKYGSNEIGQTFTKPEYLIGRAASDGAATNLNPTSEEQKQLVEKRIAWWHKLDPTNNRVIPMDLVTASASGVDPDISEAAAAYQVDRISRERGISTKTVKEIIAEHTSNRLLGFWGEPTVNVLQVNLALDSLKM.

A helical membrane pass occupies residues 13-33 (VGFLLLTLVCGVVYPGIVTII).

It belongs to the KdpC family. In terms of assembly, the system is composed of three essential subunits: KdpA, KdpB and KdpC.

Its subcellular location is the cell membrane. Part of the high-affinity ATP-driven potassium transport (or Kdp) system, which catalyzes the hydrolysis of ATP coupled with the electrogenic transport of potassium into the cytoplasm. This subunit acts as a catalytic chaperone that increases the ATP-binding affinity of the ATP-hydrolyzing subunit KdpB by the formation of a transient KdpB/KdpC/ATP ternary complex. This chain is Potassium-transporting ATPase KdpC subunit, found in Listeria welshimeri serovar 6b (strain ATCC 35897 / DSM 20650 / CCUG 15529 / CIP 8149 / NCTC 11857 / SLCC 5334 / V8).